The sequence spans 156 residues: Small ribosomal subunit protein uS7 (156 aa).

Belongs to the universal ribosomal protein uS7 family. In terms of assembly, part of the 30S ribosomal subunit. Contacts proteins S9 and S11.

Its function is as follows. One of the primary rRNA binding proteins, it binds directly to 16S rRNA where it nucleates assembly of the head domain of the 30S subunit. Is located at the subunit interface close to the decoding center, probably blocks exit of the E-site tRNA. This Deinococcus deserti (strain DSM 17065 / CIP 109153 / LMG 22923 / VCD115) protein is Small ribosomal subunit protein uS7.